Reading from the N-terminus, the 298-residue chain is ADP/ATP translocase 3 (298 aa).

An N-acetylmethionine modification is found at Met-1. Residues 1–7 lie on the Mitochondrial intermembrane side of the membrane; it reads MTEQAIS. Thr-2 is modified (N-acetylthreonine; in ADP/ATP translocase 3, N-terminally processed). The stretch at 6 to 98 is one Solcar 1 repeat; the sequence is ISFAKDFLAG…FAFKDKYKQI (93 aa). A helical membrane pass occupies residues 8-37; that stretch reads FAKDFLAGGIAAAISKTAVAPIERVKLLLQ. Residues 38–74 lie on the Mitochondrial matrix side of the membrane; it reads VQHASKQIAADKQYKGIVDCIVRIPKEQGVLSFWRGN. Lys-52 carries the N6,N6,N6-trimethyllysine modification. The chain crosses the membrane as a helical span at residues 75-99; that stretch reads LANVIRYFPTQALNFAFKDKYKQIF. ADP is bound by residues Arg-80 and Lys-92. Topologically, residues 100 to 109 are mitochondrial intermembrane; that stretch reads LGGVDKHTQF. Lys-105 carries the post-translational modification N6-acetyllysine. A helical membrane pass occupies residues 110–130; sequence WRYFAGNLASGGAAGATSLCF. Solcar repeat units lie at residues 111–201 and 212–297; these read RYFA…AKGM and VSWM…LKKV. Residues 131 to 178 are Mitochondrial matrix-facing; that stretch reads VYPLDFARTRLAADVGKSGTEREFRGLGDCLVKITKSDGIRGLYQGFS. Residues 179 to 199 traverse the membrane as a helical segment; sequence VSVQGIIIYRAAYFGVYDTAK. The Mitochondrial intermembrane portion of the chain corresponds to 200-210; that stretch reads GMLPDPKNTHI. The chain crosses the membrane as a helical span at residues 211 to 231; sequence VVSWMIAQTVTAVAGVVSYPF. Residues 232–273 lie on the Mitochondrial matrix side of the membrane; sequence DTVRRRMMMQSGRKGADIMYTGTVDCWRKIFRDEGGKAFFKG. Arg-235 provides a ligand contact to ADP. Residues 235 to 240 form an important for transport activity region; that stretch reads RRRMMM. The Nucleotide carrier signature motif signature appears at 235–240; sequence RRRMMM. At Lys-268 the chain carries N6-acetyllysine. A helical transmembrane segment spans residues 274–291; sequence AWSNVLRGMGGAFVLVLY. Over 292 to 298 the chain is Mitochondrial intermembrane; that stretch reads DELKKVI.

Belongs to the mitochondrial carrier (TC 2.A.29) family. In terms of assembly, monomer. Found in a complex with ARL2, ARL2BP and SLC25A6/ANT3. (Microbial infection) Interacts with influenza A virus PB1-F2 protein. As to quaternary structure, (Microbial infection) Interacts with HIV-1 Vpr. Post-translationally, trimethylated by ANTKMT at Lys-52. Expressed in erythrocytes (at protein level).

The protein localises to the mitochondrion inner membrane. Its subcellular location is the membrane. It carries out the reaction ADP(in) + ATP(out) = ADP(out) + ATP(in). The enzyme catalyses H(+)(in) = H(+)(out). Its activity is regulated as follows. The matrix-open state (m-state) is inhibited by the membrane-permeable bongkrekic acid (BKA). The cytoplasmic-open state (c-state) is inhibited by the membrane-impermeable toxic inhibitor carboxyatractyloside (CATR). Proton transporter activity is inhibited by ADP:ATP antiporter activity. ADP:ATP antiporter that mediates import of ADP into the mitochondrial matrix for ATP synthesis, and export of ATP out to fuel the cell. Cycles between the cytoplasmic-open state (c-state) and the matrix-open state (m-state): operates by the alternating access mechanism with a single substrate-binding site intermittently exposed to either the cytosolic (c-state) or matrix (m-state) side of the inner mitochondrial membrane. In addition to its ADP:ATP antiporter activity, also involved in mitochondrial uncoupling and mitochondrial permeability transition pore (mPTP) activity. Plays a role in mitochondrial uncoupling by acting as a proton transporter: proton transport uncouples the proton flows via the electron transport chain and ATP synthase to reduce the efficiency of ATP production and cause mitochondrial thermogenesis. Proton transporter activity is inhibited by ADP:ATP antiporter activity, suggesting that SLC25A6/ANT3 acts as a master regulator of mitochondrial energy output by maintaining a delicate balance between ATP production (ADP:ATP antiporter activity) and thermogenesis (proton transporter activity). Proton transporter activity requires free fatty acids as cofactor, but does not transport it. Also plays a key role in mPTP opening, a non-specific pore that enables free passage of the mitochondrial membranes to solutes of up to 1.5 kDa, and which contributes to cell death. It is however unclear if SLC25A6/ANT3 constitutes a pore-forming component of mPTP or regulates it. In Homo sapiens (Human), this protein is ADP/ATP translocase 3.